A 479-amino-acid chain; its full sequence is MRKPAFGVSALLIALTLGACSMAPTYERPAAPVADSWSGAAAQRQGAAIDTLDWKSFIVDAELRRLVDMALDNNRSLRQTLLDIEAARAQYRIQRADRVPGLNAAATGNRQRQPADLSAGNRSEVASSYQVGLALPEYELDLFGRVKSLTDAALQQYLASEEAARAARIALVAEVSQAYLSYDGALRRLALTRQTLVSREYSFALIDQRRAAGAATALDYQEALGLVEQARAEQERNLRQKQQAFNALVLLLGSDDAAQAIPRSPGQRPKLLQDIAPGTPSELIERRPDILAAEHRLRARNADIGAARAAFFPRISLTGSFGTSSAEMSGLFDGGSRSWSFLPTLTLPIFDGGRNRANLSLAEARKDSAVAAYEGTIQTAFREVADALAASDTLRREEKALRALANSSNEALKLAKARYESGVDNHLRYLDAQRSSFLNEIAFIDGSTQRQIALVDLFRALGGGWDEGRSLVVHRGGRS.

The signal sequence occupies residues 1–19 (MRKPAFGVSALLIALTLGA). Cys20 carries N-palmitoyl cysteine lipidation. Cys20 carries the S-diacylglycerol cysteine lipid modification. Positions 102-121 (LNAAATGNRQRQPADLSAGN) are disordered.

This sequence belongs to the outer membrane factor (OMF) (TC 1.B.17) family.

It is found in the cell outer membrane. Channel-forming component of a multidrug resistance efflux pump. This chain is Outer membrane protein OprJ (oprJ), found in Pseudomonas aeruginosa (strain ATCC 15692 / DSM 22644 / CIP 104116 / JCM 14847 / LMG 12228 / 1C / PRS 101 / PAO1).